The chain runs to 222 residues: Peroxiredoxin (222 aa).

The region spanning 2–157 (VVLGQKFPEV…ILRLVEALQT (156 aa)) is the Thioredoxin domain. The active-site Cysteine sulfenic acid (-SOH) intermediate is the cysteine 44. Arginine 120 provides a ligand contact to substrate. Cysteine 211 and cysteine 217 are joined by a disulfide.

It belongs to the peroxiredoxin family. Prx6 subfamily. As to quaternary structure, homodecamer. Pentamer of dimers that assemble into a ring structure.

The protein localises to the cytoplasm. The catalysed reaction is a hydroperoxide + [thioredoxin]-dithiol = an alcohol + [thioredoxin]-disulfide + H2O. Functionally, thiol-specific peroxidase that catalyzes the reduction of hydrogen peroxide and organic hydroperoxides to water and alcohols, respectively. Plays a role in cell protection against oxidative stress by detoxifying peroxides. In Nanoarchaeum equitans (strain Kin4-M), this protein is Peroxiredoxin.